Here is a 49-residue protein sequence, read N- to C-terminus: uncharacterized protein (49 aa).

This is an uncharacterized protein from Sulfolobus islandicus filamentous virus (isolate Iceland/Hveragerdi) (SIFV).